A 140-amino-acid chain; its full sequence is Large ribosomal subunit protein bL17 (140 aa).

Belongs to the bacterial ribosomal protein bL17 family. As to quaternary structure, part of the 50S ribosomal subunit. Contacts protein L32.

This Paracoccus denitrificans (strain Pd 1222) protein is Large ribosomal subunit protein bL17.